We begin with the raw amino-acid sequence, 400 residues long: Cytochrome b (400 aa).

The helical transmembrane segment at 47–67 threads the bilayer; that stretch reads LGSIAGIALVIQIITGVILAM. Heme b-binding residues include H97 and H111. Helical transmembrane passes span 98 to 118, 131 to 151, 166 to 186, 194 to 214, 247 to 267, 306 to 326, 341 to 361, and 368 to 388; these read AVGA…GLYY, IGII…VLPW, FSAI…GFSV, FFSL…LHLV, FVGF…EPNY, LGGV…PWLD, IAFW…GQPA, and ISRF…PLIG. Heme b contacts are provided by H198 and H212.

The protein belongs to the cytochrome b family. In terms of assembly, the main subunits of complex b-c1 are: cytochrome b, cytochrome c1 and the Rieske protein. Heme b is required as a cofactor.

The protein localises to the cell membrane. In terms of biological role, component of the ubiquinol-cytochrome c reductase complex (complex III or cytochrome b-c1 complex), which is a respiratory chain that generates an electrochemical potential coupled to ATP synthesis. The protein is Cytochrome b (petB) of Rickettsia bellii (strain RML369-C).